The chain runs to 924 residues: Lipoxygenase 7, chloroplastic (924 aa).

Residues 1–61 (MLRPQLNPSS…GQGSSRVVVV (61 aa)) constitute a chloroplast transit peptide. The 131-residue stretch at 88-218 (AVATIKVTVG…VGDEGTPSKR (131 aa)) folds into the PLAT domain. Residues 225 to 924 (TYLPGQTPAG…GMGIPNSTSI (700 aa)) enclose the Lipoxygenase domain. Residues 231–315 (TPAGLRSYRK…PKSETRKGNV (85 aa)) are disordered. Composition is skewed to basic and acidic residues over residues 239 to 262 (RKNDLQQKRGDGTGEREADDRVYD) and 302 to 315 (SKKDPKSETRKGNV). 5 residues coordinate Fe cation: His-581, His-586, His-773, Asn-777, and Ile-924.

Belongs to the lipoxygenase family. Requires Fe cation as cofactor.

It localises to the plastid. The protein localises to the chloroplast. The enzyme catalyses (9Z,12Z)-octadecadienoate + O2 = (13S)-hydroperoxy-(9Z,11E)-octadecadienoate. It carries out the reaction (9Z,12Z,15Z)-octadecatrienoate + O2 = (13S)-hydroperoxy-(9Z,11E,15Z)-octadecatrienoate. It participates in lipid metabolism; oxylipin biosynthesis. Functionally, plant lipoxygenase may be involved in a number of diverse aspects of plant physiology including growth and development, pest resistance, and senescence or responses to wounding. This lipoxygenase introduces molecular oxygen exclusively into the C-13 position of linoleic and linolenic acids. This is Lipoxygenase 7, chloroplastic (CM-LOX1) from Oryza sativa subsp. japonica (Rice).